Consider the following 356-residue polypeptide: uncharacterized protein (356 aa).

6 consecutive transmembrane segments (helical) span residues 2 to 22, 35 to 55, 74 to 94, 99 to 119, 124 to 144, and 154 to 174; these read FEAFIYNISVIVAGIYLFHRL, AYVTVLMTIVSLLLSVYPIPY, FTNMVYTLSATVIVAIVEIVV, IMYGVTLIVIAAVTSAIGPFL, VLSLLILNVVTIIILFGVALV, and IILIPISLIITLASAITFVDI. Residues 218 to 353 enclose the GGDEF domain; the sequence is QSIALLLIDI…GRNKVMFNPI (136 aa).

It is found in the cell membrane. This is an uncharacterized protein from Staphylococcus aureus (strain bovine RF122 / ET3-1).